Consider the following 200-residue polypeptide: Large ribosomal subunit protein uL4 (200 aa).

The segment at 38 to 67 (GRQGSKAQKTRSEVSGGGKKPWRQKGTGRA) is disordered.

The protein belongs to the universal ribosomal protein uL4 family. As to quaternary structure, part of the 50S ribosomal subunit.

Functionally, one of the primary rRNA binding proteins, this protein initially binds near the 5'-end of the 23S rRNA. It is important during the early stages of 50S assembly. It makes multiple contacts with different domains of the 23S rRNA in the assembled 50S subunit and ribosome. Forms part of the polypeptide exit tunnel. The polypeptide is Large ribosomal subunit protein uL4 (Pseudomonas paraeruginosa (strain DSM 24068 / PA7) (Pseudomonas aeruginosa (strain PA7))).